The following is a 196-amino-acid chain: 3-isopropylmalate dehydratase small subunit (196 aa).

Belongs to the LeuD family. LeuD type 1 subfamily. In terms of assembly, heterodimer of LeuC and LeuD.

The enzyme catalyses (2R,3S)-3-isopropylmalate = (2S)-2-isopropylmalate. Its pathway is amino-acid biosynthesis; L-leucine biosynthesis; L-leucine from 3-methyl-2-oxobutanoate: step 2/4. Its function is as follows. Catalyzes the isomerization between 2-isopropylmalate and 3-isopropylmalate, via the formation of 2-isopropylmaleate. The chain is 3-isopropylmalate dehydratase small subunit from Streptococcus sanguinis (strain SK36).